The primary structure comprises 1835 residues: AT-rich interactive domain-containing protein 2 (1835 aa).

Alanine 2 carries the N-acetylalanine modification. The residue at position 4 (serine 4) is a Phosphoserine. Residues lysine 7, lysine 15, and lysine 119 each participate in a glycyl lysine isopeptide (Lys-Gly) (interchain with G-Cter in SUMO2) cross-link. The ARID domain occupies 13–105 (RRKGLAFLDE…YLEKYEKVHH (93 aa)). Residues 313 to 317 (LRFLL) carry the LXXLL motif. Positions 524 to 603 (ACQWLNAHFE…IHVVGVKRRA (80 aa)) form a DNA-binding region, RFX-type winged-helix. Lysine 555 is covalently cross-linked (Glycyl lysine isopeptide (Lys-Gly) (interchain with G-Cter in SUMO2)). A phosphoserine mark is found at serine 631 and serine 635. Phosphothreonine is present on threonine 653. The residue at position 689 (serine 689) is a Phosphoserine. Phosphothreonine is present on threonine 692. 5 disordered regions span residues 819 to 844 (QQLI…QSQD), 962 to 1057 (LTGQ…SGES), 1266 to 1287 (MENP…KENE), 1295 to 1314 (NGRK…KIQS), and 1321 to 1341 (LISN…KQNS). Composition is skewed to low complexity over residues 823 to 843 (TTSP…SQSQ), 985 to 996 (PTAMSSSSTPQS), and 1025 to 1044 (QVQV…QPQQ). Phosphoserine is present on serine 1300. Positions 1301-1314 (DSSLPPSNSGKIQS) are enriched in polar residues. Phosphoserine is present on residues serine 1391 and serine 1496. Disordered regions lie at residues 1488-1522 (DSGS…AEDT) and 1572-1629 (SAVQ…RKPG). The segment covering 1491-1509 (SKVSHSPALSSDVRSTNGT) has biased composition (polar residues). The span at 1513 to 1522 (KTVKRPAEDT) shows a compositional bias: basic and acidic residues. The span at 1573-1592 (AVQQKQQHPPTYVQNVVPQN) shows a compositional bias: polar residues. Residues 1602–1623 (QVQGQPNSSQPSPFSGSSQPGD) show a composition bias toward low complexity. A C2H2-type zinc finger spans residues 1632–1657 (FMCLWQSCKKWFQTPSQVFYHAATEH). Residues lysine 1701, lysine 1716, and lysine 1731 each participate in a glycyl lysine isopeptide (Lys-Gly) (interchain with G-Cter in SUMO2) cross-link. Residues 1703-1728 (DEPGQAGSQKSSTKQPTVGGTSSTPR) are disordered. The span at 1708 to 1728 (AGSQKSSTKQPTVGGTSSTPR) shows a compositional bias: polar residues.

As to quaternary structure, component of the SWI/SNF-B (PBAF) chromatin remodeling complex, at least composed of SMARCA4/BRG1, SMARCB1/BAF47/SNF5, ACTL6A/BAF53A or ACTL6B/BAF53B, SMARCE1/BAF57, SMARCD1/BAF60A, SMARCD2/BAF60B, perhaps SMARCD3/BAF60C, SMARCC1/BAF155, SMARCC2/BAF170, PBRM1/BAF180, ARID2/BAF200 and actin. Interacts with SRF. Forms complexes with SRF and SRF cofactors MYOCD, NKX2-5 and SRFBP1. Highly expressed in heart.

Its subcellular location is the nucleus. In terms of biological role, involved in transcriptional activation and repression of select genes by chromatin remodeling (alteration of DNA-nucleosome topology). Required for the stability of the SWI/SNF chromatin remodeling complex SWI/SNF-B (PBAF). May be involved in targeting the complex to different genes. May be involved in regulating transcriptional activation of cardiac genes. The chain is AT-rich interactive domain-containing protein 2 from Homo sapiens (Human).